The sequence spans 615 residues: Sodium-dependent dopamine transporter (615 aa).

The disordered stretch occupies residues Met1–Ala39. Topologically, residues Met1–Lys46 are cytoplasmic. Polar residues predominate over residues Arg15–Thr24. The chain crosses the membrane as a helical span at residues Leu47–Lys72. Positions 55, 57, 58, and 62 each coordinate Na(+). Residues Asn73–Gly76 lie on the Extracellular side of the membrane. A helical transmembrane segment spans residues Val77–Leu100. At Gly101–Lys120 the chain is on the cytoplasmic side. The helical transmembrane segment at Gly121 to Ser151 threads the bilayer. The Extracellular segment spans residues Phe152 to Val229. An intrachain disulfide couples Cys161 to Cys170. N-linked (GlcNAc...) asparagine glycans are attached at residues Asn162 and Asn187. Residues Arg230–Lys250 form a helical membrane-spanning segment. Residues Gly251 to His253 are Cytoplasmic-facing. A helical membrane pass occupies residues Thr254 to Val278. At Thr279–Ser302 the chain is on the extracellular side. The helical transmembrane segment at Val303–Tyr328 threads the bilayer. Residue Ser314 coordinates Na(+). Residues Asn329–Asn334 are Cytoplasmic-facing. A helical transmembrane segment spans residues Val335–Phe358. Asn346 is a binding site for Na(+). The Extracellular portion of the chain corresponds to Ser359 to Pro398. A helical transmembrane segment spans residues Phe399–Ile424. 3 residues coordinate Na(+): Leu411, Asp414, and Ser415. Residues Thr425 to Glu439 are Cytoplasmic-facing. A helical membrane pass occupies residues Val440–Gly460. A topological domain (extracellular) is located at residue Gly461. A helical membrane pass occupies residues Ile462–Ile488. Residues Ala489–Ser518 are Cytoplasmic-facing. Residues Cys519–Tyr541 traverse the membrane as a helical segment. At Gln542 to Tyr544 the chain is on the extracellular side. The helical transmembrane segment at Thr545–Ile565 threads the bilayer. At Pro566–Leu615 the chain is on the cytoplasmic side.

This sequence belongs to the sodium:neurotransmitter symporter (SNF) (TC 2.A.22) family.

It localises to the cell membrane. In terms of biological role, dopamine transporter. Terminates the action of dopamine by its high affinity sodium-dependent reuptake into presynaptic terminals. Plays a role in the learned avoidance behavior of animals exposed to food that induces mitochondrial stress. This is Sodium-dependent dopamine transporter from Caenorhabditis elegans.